A 72-amino-acid chain; its full sequence is uncharacterized protein (72 aa).

This is an uncharacterized protein from Bacillus subtilis (strain 168).